We begin with the raw amino-acid sequence, 142 residues long: Anti-sigma F factor (142 aa).

The protein belongs to the anti-sigma-factor family.

The enzyme catalyses L-seryl-[protein] + ATP = O-phospho-L-seryl-[protein] + ADP + H(+). The catalysed reaction is L-threonyl-[protein] + ATP = O-phospho-L-threonyl-[protein] + ADP + H(+). Its function is as follows. Binds to sigma F and blocks its ability to form an RNA polymerase holoenzyme (E-sigma F). Phosphorylates SpoIIAA on a serine residue. This phosphorylation may enable SpoIIAA to act as an anti-anti-sigma factor that counteracts SpoIIAB and thus releases sigma F from inhibition. This chain is Anti-sigma F factor, found in Clostridium kluyveri (strain NBRC 12016).